Consider the following 393-residue polypeptide: Methylthioribose kinase (393 aa).

Residues asparagine 38, lysine 53, and 107-109 each bind ATP; that span reads EDL. Aspartate 225 contacts substrate. 242–244 contacts ATP; sequence DPE. Residue arginine 332 participates in substrate binding.

The protein belongs to the methylthioribose kinase family. As to quaternary structure, homodimer.

The enzyme catalyses 5-(methylsulfanyl)-D-ribose + ATP = 5-(methylsulfanyl)-alpha-D-ribose 1-phosphate + ADP + H(+). Its pathway is amino-acid biosynthesis; L-methionine biosynthesis via salvage pathway; S-methyl-5-thio-alpha-D-ribose 1-phosphate from S-methyl-5'-thioadenosine (hydrolase route): step 2/2. Its function is as follows. Catalyzes the phosphorylation of methylthioribose into methylthioribose-1-phosphate. The protein is Methylthioribose kinase of Bacillus cereus (strain B4264).